The following is a 137-amino-acid chain: Nucleoside diphosphate kinase (137 aa).

ATP is bound by residues K9, F58, R86, T92, R103, and N113. The Pros-phosphohistidine intermediate role is filled by H121.

The protein belongs to the NDK family. In terms of assembly, homotetramer. It depends on Mg(2+) as a cofactor.

It localises to the cytoplasm. It catalyses the reaction a 2'-deoxyribonucleoside 5'-diphosphate + ATP = a 2'-deoxyribonucleoside 5'-triphosphate + ADP. The enzyme catalyses a ribonucleoside 5'-diphosphate + ATP = a ribonucleoside 5'-triphosphate + ADP. Its function is as follows. Major role in the synthesis of nucleoside triphosphates other than ATP. The ATP gamma phosphate is transferred to the NDP beta phosphate via a ping-pong mechanism, using a phosphorylated active-site intermediate. This is Nucleoside diphosphate kinase from Streptococcus pneumoniae (strain Hungary19A-6).